The primary structure comprises 392 residues: MDTITSFLKKESSAGILLIIVTVLALILQNSFLSAAYTSFLHTPVEIRFGALHIAKPLLLWVNDGLMAIFFFLIGLEVKREVMEGHLSSLKQITLPGIAAVGGMIVPALIFILFNKGESFAMNGWAIPTATDIAFALGILSLLGPRVPLSLKIFLMALSIIDDLGAIVIIALFYTTDLSTLSITVAAISLAILFIMNRMDVAIKSAYIVIGIILWVSVLKSGVHATLAGVALAFMIPMESKNKKGNRFSMAKEMEHDLHYWVAFLILPLFAFVNAGVDLKGISLEAMSGPVPLGVMLGLFVGKQAGVFGFSWLAIKMGMASLPKESSWMMLYGVSVLTGIGFTMSLFVDSLAYDDTQIYHYADKLAILLGSFLSAATGYLILRMQKNKNVES.

Helical transmembrane passes span 16–36, 58–78, 93–113, 124–144, 153–173, 176–196, 199–219, 257–277, 295–315, 328–348, and 362–382; these read ILLI…LSAA, LLLW…GLEV, ITLP…IFIL, GWAI…SLLG, IFLM…IALF, TDLS…LFIM, MDVA…VSVL, DLHY…NAGV, VMLG…WLAI, WMML…SLFV, and ADKL…YLIL.

The protein belongs to the NhaA Na(+)/H(+) (TC 2.A.33) antiporter family.

The protein localises to the cell inner membrane. It catalyses the reaction Na(+)(in) + 2 H(+)(out) = Na(+)(out) + 2 H(+)(in). Na(+)/H(+) antiporter that extrudes sodium in exchange for external protons. This Sulfurovum sp. (strain NBC37-1) protein is Na(+)/H(+) antiporter NhaA.